We begin with the raw amino-acid sequence, 239 residues long: MGIIGKSVSLTLFALLCFTSSVFTLGVNQPGSSDPFHSLPQHLPLPPIKLPTLPPAKAPIKLPAYPPAKAPIKLPTLPPAKAPIKLPTLPPIKPPVLPPVYPPKYNKTLVAVRGVVYCKACKYAGVNNVQGAKPVKDAVVRLVCKNKKNSISETKTDKNGYFMLLAPKTVTNYDIKGCRAFLVKSPDTKCSKVSSLHDGGKGSVLKPVLKPGFSSTIMRWFKYSVYNVGPFAFEPTCPK.

Residues 1 to 24 (MGIIGKSVSLTLFALLCFTSSVFT) form the signal peptide. Asn-106 is a glycosylation site (N-linked (GlcNAc...) asparagine).

Belongs to the non-classical AGP family. Specifically expressed in root tips.

Its subcellular location is the secreted. The protein localises to the cell wall. Functionally, proteoglycan required for the timing of seed germination. May function in the abscisic acid (ABA) response. The sequence is that of Non-classical arabinogalactan protein 30 from Arabidopsis thaliana (Mouse-ear cress).